The chain runs to 505 residues: Argininosuccinate lyase (505 aa).

The protein belongs to the lyase 1 family. Argininosuccinate lyase subfamily.

It localises to the cytoplasm. It carries out the reaction 2-(N(omega)-L-arginino)succinate = fumarate + L-arginine. The protein operates within amino-acid biosynthesis; L-arginine biosynthesis; L-arginine from L-ornithine and carbamoyl phosphate: step 3/3. The polypeptide is Argininosuccinate lyase (Rhodococcoides fascians (Rhodococcus fascians)).